Reading from the N-terminus, the 503-residue chain is Aspartyl/glutamyl-tRNA(Asn/Gln) amidotransferase subunit B (503 aa).

Belongs to the GatB/GatE family. GatB subfamily. Heterotrimer of A, B and C subunits.

The enzyme catalyses L-glutamyl-tRNA(Gln) + L-glutamine + ATP + H2O = L-glutaminyl-tRNA(Gln) + L-glutamate + ADP + phosphate + H(+). It catalyses the reaction L-aspartyl-tRNA(Asn) + L-glutamine + ATP + H2O = L-asparaginyl-tRNA(Asn) + L-glutamate + ADP + phosphate + 2 H(+). Allows the formation of correctly charged Asn-tRNA(Asn) or Gln-tRNA(Gln) through the transamidation of misacylated Asp-tRNA(Asn) or Glu-tRNA(Gln) in organisms which lack either or both of asparaginyl-tRNA or glutaminyl-tRNA synthetases. The reaction takes place in the presence of glutamine and ATP through an activated phospho-Asp-tRNA(Asn) or phospho-Glu-tRNA(Gln). The polypeptide is Aspartyl/glutamyl-tRNA(Asn/Gln) amidotransferase subunit B (Cereibacter sphaeroides (strain KD131 / KCTC 12085) (Rhodobacter sphaeroides)).